Reading from the N-terminus, the 59-residue chain is Large ribosomal subunit protein bL32 (59 aa).

The segment at 1 to 40 (MAVQQNKKSPSKRGMHRSHDFLRTTPLSVDPGTGEVHLRH) is disordered.

Belongs to the bacterial ribosomal protein bL32 family.

The polypeptide is Large ribosomal subunit protein bL32 (Nitrosospira multiformis (strain ATCC 25196 / NCIMB 11849 / C 71)).